Consider the following 571-residue polypeptide: MRMDTLDSQAAEAAQEEEIQRKLEELVTLAKDQGFITYEEINEILPPSFDTPEQIDQVLIFLAGMDVQVLNQADVERQKERKKEAKELEGLAKRSEGTPDDPVRMYLKEMGTVPLLTREEEVEISKRIEKAQVQIERIILRFRYSTKEAVSIAQYLINGKERFDKIVSEKEVEDKTHFLNLLPKLISLLKEEDAYLEERLLALKDPALSKPDQARLNDELEKCRIRTQAYLRCFHCRHNVTEDFGEVVFKAYDSFLQLEQQINDLKARAERNKFAAAKLAAARRKLHKREVAAGRTLEEFKKDVRMLQRWMDKSQEAKKEMVESNLRLVISIAKKYTNRGLSFLDLIQEGNMGLMKAVEKFEYRRGYKFSTYATWWIRQAVTRAIADQARTIRIPVHMIETINKVLRGAKKLMMETGKEPTPEELGEELGFTPDRVREIYKIAQHPISLQAEVGDGGESSFGDFLEDTAVESPAEATGYSMLKDKMKEVLKTLTDRERFVLIHRFGLLDGRPKTLEEVGSAFNVTRERIRQIEAKALRKMRHPIRSKQLRAFLDLLEEEKIGSGKIKSYKN.

Residues 321–391 form a sigma-70 factor domain-2 region; the sequence is MVESNLRLVI…TRAIADQART (71 aa). Residues 345–348 carry the Interaction with polymerase core subunit RpoC motif; it reads DLIQ. The interval 400–476 is sigma-70 factor domain-3; sequence ETINKVLRGA…DTAVESPAEA (77 aa). Residues 489 to 542 form a sigma-70 factor domain-4 region; that stretch reads VLKTLTDRERFVLIHRFGLLDGRPKTLEEVGSAFNVTRERIRQIEAKALRKMRH. The H-T-H motif DNA-binding region spans 515–534; sequence LEEVGSAFNVTRERIRQIEA.

Belongs to the sigma-70 factor family. RpoD/SigA subfamily. Interacts transiently with the RNA polymerase catalytic core.

It localises to the cytoplasm. Functionally, sigma factors are initiation factors that promote the attachment of RNA polymerase to specific initiation sites and are then released. This sigma factor is the primary sigma factor during exponential growth. The protein is RNA polymerase sigma factor SigA of Chlamydia trachomatis serovar D (strain ATCC VR-885 / DSM 19411 / UW-3/Cx).